The sequence spans 1404 residues: MDGGGGETYGCGGGRREGGWAWAAAAADSVFSRSSSSAREDDEEDLRWAALEKLPTYDRARTALLALPPDGELREVNVRRLAADEQRALLERVAGVADDHAGFLCMFKERLDRVGIKLPTIEVRYENLNVEAESYVGSRGFPTIFNTYANIFEGLGNALHITRKKKQKISILHNVSGIVKPHRMTLLLGPPGSGKTSLLMALAGTLPSTVKVSGTITYNGHTMDEFVPQRSAAYVSQHDLHMAELTVRETVSFSAKCQGVGHHYDMLMELLRREKEENIKPDPEIDLYLKQKAEVVTNHILKILGLDICADTIVGNNMVRGISGGQKKRLTTAEMLVTPGRALFMDEILTGLDSSTTFQIVNSIRQTVHILGGTTIIALLQPAPETYELFDEIIILSDGQVVYNGPRDHVLEFFQSIGFKCPERKGVADFLQEVTSRKDQKQYWTHGDSTYRYISAAEIAEAFQSFHVGQAVRTELVVPFGKGKSHPAALRTSKYGVSMKELLQANIDREILLMKRNSFLYIFQAIRLTVMAINTMTVFMRTNMHRDSIENGRIYMGAQFYGMLMIMFNGLAEMGLAIAKLPVFFKQRDLFFYPAWTYSLPSWILKTPISFLNTIVWVFLTYYVIGFDPNIERFFRQFLALFVMSEATSGLFRFIASLTRDPVVASTMGSSCILISMLSSGFILSREEIKKWWIWGYWISPLMYALNTLAVNEFLGNSWNKTISGFSEPLGRLVLESRGFFPEAKWYWIGVGALLGYVILLNVLYTICLIFLTCTVDVNNDEATSNHMIGNSSSGIKGMVLPFVPLSITFEDIKYSIDMPEALKTQATESRLELLKDISGSFRPGVLTALMGVSGAGKTTLLDVLAGRKTSGYIEGNITISGYPKKQETFARVSGYCEQNDIHSPNVTIYESLMFSAWLRLPTKIDSATRKMIIEEVMELVELYPLKDALVGLPGVSGLSIEQRKRLTIAVELVANPSIIFLDEPTSGLDARAAAIVMRAIRNTVDTGRTVVCTIHQPSIDIFESFDELFLMKRGGEEIYVGPLGQHSCELIRYFEAIEGVSKIKHGYNPSTWMLEVTSPMQEQKTGVNFTQVYKNSELYRRNKNLIKELSTPHESSSDLSFPTQYSQPFLTQCLACLWKQRLSYWRNPRYIAVKYFFTIIVALLFGTMFWGIGQKRNNKQALFSAMGSMYSTCLTMGVQNSASVQPIVSIERTVFYRERASHMYSPLPYALGQVAIELPYIFLQTIIYGMLVYAMIGYEWSGAKFFWYLFFMYFTLSYYTFYGMMAVGLTPNYNMSTVVSTGFYTMWNLFSGFLIPLTRIPIWWRWYYWICPVAWTLNGLVTSQFGDVSDKFDDGERVSDFVKNYFGFHHELLWVPAMVVVSFAVLFAFLFGLSLRLFNFQKR.

The 268-residue stretch at 156–423 folds into the ABC transporter 1 domain; the sequence is GNALHITRKK…FQSIGFKCPE (268 aa). 189–196 is an ATP binding site; it reads GPPGSGKT. An ABC transmembrane type-2 1 domain is found at 501–714; sequence ELLQANIDRE…ALNTLAVNEF (214 aa). 7 helical membrane passes run 519–539, 565–585, 607–627, 638–658, 663–683, 692–712, and 751–771; these read FLYI…MTVF, MIMF…PVFF, TPIS…VIGF, FLAL…IASL, VVAS…SGFI, WWIW…LAVN, and VGAL…CLIF. An ABC transporter 2 domain is found at 808–1059; that stretch reads ITFEDIKYSI…ELIRYFEAIE (252 aa). 852 to 859 lines the ATP pocket; it reads GVSGAGKT. Residues 1132-1346 enclose the ABC transmembrane type-2 2 domain; that stretch reads TQCLACLWKQ…TLNGLVTSQF (215 aa). The next 7 helical transmembrane spans lie at 1152–1172, 1183–1199, 1239–1259, 1266–1286, 1298–1318, 1321–1341, and 1373–1393; these read IAVK…MFWG, LFSA…TMGV, LPYI…MIGY, FFWY…YGMM, TVVS…LIPL, IPIW…LNGL, and LLWV…FLFG.

The protein belongs to the ABC transporter superfamily. ABCG family. PDR (TC 3.A.1.205) subfamily.

The protein resides in the membrane. In terms of biological role, may be a general defense protein. This chain is ABC transporter G family member 47, found in Oryza sativa subsp. japonica (Rice).